A 262-amino-acid chain; its full sequence is Adenosylcobinamide-GDP ribazoletransferase (262 aa).

Helical transmembrane passes span 4 to 21 (AWSG…IPIR), 37 to 57 (AFPL…FIFS), 62 to 82 (LSPL…AGGL), 112 to 132 (VGAF…LFVF), 141 to 161 (IFLI…LLIY), 181 to 201 (YDAH…CAIH), 202 to 222 (FSVW…VFVA), and 236 to 256 (DALG…IWLL).

It belongs to the CobS family. Requires Mg(2+) as cofactor.

It is found in the cell membrane. It carries out the reaction alpha-ribazole + adenosylcob(III)inamide-GDP = adenosylcob(III)alamin + GMP + H(+). The enzyme catalyses alpha-ribazole 5'-phosphate + adenosylcob(III)inamide-GDP = adenosylcob(III)alamin 5'-phosphate + GMP + H(+). Its pathway is cofactor biosynthesis; adenosylcobalamin biosynthesis; adenosylcobalamin from cob(II)yrinate a,c-diamide: step 7/7. Functionally, joins adenosylcobinamide-GDP and alpha-ribazole to generate adenosylcobalamin (Ado-cobalamin). Also synthesizes adenosylcobalamin 5'-phosphate from adenosylcobinamide-GDP and alpha-ribazole 5'-phosphate. This is Adenosylcobinamide-GDP ribazoletransferase from Geobacillus sp. (strain WCH70).